The sequence spans 43 residues: METATVLSIFISSLLLGITGYSIYTAFGPASKDLRDPFEEHEE.

A helical transmembrane segment spans residues 5–27 (TVLSIFISSLLLGITGYSIYTAF).

Belongs to the PsbN family.

The protein resides in the plastid. Its subcellular location is the chloroplast thylakoid membrane. In terms of biological role, may play a role in photosystem I and II biogenesis. The chain is Protein PsbN from Porphyra purpurea (Red seaweed).